The chain runs to 76 residues: Acyl carrier protein (76 aa).

Positions 1–76 (MATFDDVKDV…AAIDYIESKQ (76 aa)) constitute a Carrier domain. S36 is modified (O-(pantetheine 4'-phosphoryl)serine).

It belongs to the acyl carrier protein (ACP) family. In terms of processing, 4'-phosphopantetheine is transferred from CoA to a specific serine of apo-ACP by AcpS. This modification is essential for activity because fatty acids are bound in thioester linkage to the sulfhydryl of the prosthetic group.

It is found in the cytoplasm. Its pathway is lipid metabolism; fatty acid biosynthesis. Its function is as follows. Carrier of the growing fatty acid chain in fatty acid biosynthesis. The polypeptide is Acyl carrier protein (Deinococcus deserti (strain DSM 17065 / CIP 109153 / LMG 22923 / VCD115)).